The following is a 175-amino-acid chain: ATP synthase subunit delta (175 aa).

This sequence belongs to the ATPase delta chain family. As to quaternary structure, F-type ATPases have 2 components, F(1) - the catalytic core - and F(0) - the membrane proton channel. F(1) has five subunits: alpha(3), beta(3), gamma(1), delta(1), epsilon(1). F(0) has three main subunits: a(1), b(2) and c(10-14). The alpha and beta chains form an alternating ring which encloses part of the gamma chain. F(1) is attached to F(0) by a central stalk formed by the gamma and epsilon chains, while a peripheral stalk is formed by the delta and b chains.

The protein localises to the cell inner membrane. Its function is as follows. F(1)F(0) ATP synthase produces ATP from ADP in the presence of a proton or sodium gradient. F-type ATPases consist of two structural domains, F(1) containing the extramembraneous catalytic core and F(0) containing the membrane proton channel, linked together by a central stalk and a peripheral stalk. During catalysis, ATP synthesis in the catalytic domain of F(1) is coupled via a rotary mechanism of the central stalk subunits to proton translocation. Functionally, this protein is part of the stalk that links CF(0) to CF(1). It either transmits conformational changes from CF(0) to CF(1) or is implicated in proton conduction. In Xylella fastidiosa (strain M23), this protein is ATP synthase subunit delta.